A 597-amino-acid chain; its full sequence is Alkyldihydroxyacetonephosphate synthase (597 aa).

One can recognise an FAD-binding PCMH-type domain in the interval 131-313 (IPRLPDIVVW…SEVTIKIFPI (183 aa)). FAD contacts are provided by residues 163-169 (PIGGGTS), 232-238 (DSIEFST), 245-248 (TRAS), and 297-303 (EGTLGVV). Arg-444 lines the substrate pocket. Tyr-507 (proton donor/acceptor) is an active-site residue. The segment at 544–546 (HHH) is important for enzyme activity. The short motif at 595 to 597 (CKL) is the Microbody targeting signal element.

Belongs to the FAD-binding oxidoreductase/transferase type 4 family. Homodimer. The cofactor is FAD.

The protein localises to the peroxisome. It catalyses the reaction a long chain fatty alcohol + a 1-acylglycerone 3-phosphate = a 1-O-alkylglycerone 3-phosphate + a long-chain fatty acid + H(+). Its pathway is glycerolipid metabolism; ether lipid biosynthesis. In terms of biological role, catalyzes the exchange of an acyl for a long-chain alkyl group and the formation of the ether bond in the biosynthesis of ether phospholipids. This Caenorhabditis elegans protein is Alkyldihydroxyacetonephosphate synthase (ads-1).